The chain runs to 288 residues: Acetyl-coenzyme A carboxylase carboxyl transferase subunit beta (288 aa).

The CoA carboxyltransferase N-terminal domain maps to 34-288 (LFAKCPACKH…HLVAFHGGGQ (255 aa)). Residues C38, C41, C56, and C59 each contribute to the Zn(2+) site. The segment at 38–59 (CPACKHMIYKKDLGLAKICPTC) adopts a C4-type zinc-finger fold.

It belongs to the AccD/PCCB family. In terms of assembly, acetyl-CoA carboxylase is a heterohexamer composed of biotin carboxyl carrier protein (AccB), biotin carboxylase (AccC) and two subunits each of ACCase subunit alpha (AccA) and ACCase subunit beta (AccD). Zn(2+) is required as a cofactor.

Its subcellular location is the cytoplasm. It catalyses the reaction N(6)-carboxybiotinyl-L-lysyl-[protein] + acetyl-CoA = N(6)-biotinyl-L-lysyl-[protein] + malonyl-CoA. Its pathway is lipid metabolism; malonyl-CoA biosynthesis; malonyl-CoA from acetyl-CoA: step 1/1. Component of the acetyl coenzyme A carboxylase (ACC) complex. Biotin carboxylase (BC) catalyzes the carboxylation of biotin on its carrier protein (BCCP) and then the CO(2) group is transferred by the transcarboxylase to acetyl-CoA to form malonyl-CoA. The chain is Acetyl-coenzyme A carboxylase carboxyl transferase subunit beta from Streptococcus pyogenes serotype M4 (strain MGAS10750).